The following is a 109-amino-acid chain: MSSFIDITNVISSHIEANLPAIASENVGSLANGAGIAYLGKYIGTGITMLAAGAVGLMQGFSTANAVQAVARNPEAQPKILSTMIVGLALAEAVAIYALIVSILIIFVA.

The next 2 helical transmembrane spans lie at 42–62 and 88–108; these read YIGT…QGFS and LALA…IIFV.

It belongs to the ATPase C chain family. In terms of assembly, F-type ATPases have 2 components, F(1) - the catalytic core - and F(0) - the membrane proton channel. F(1) has five subunits: alpha(3), beta(3), gamma(1), delta(1), epsilon(1). F(0) has three main subunits: a(1), b(2) and c(10-14). The alpha and beta chains form an alternating ring which encloses part of the gamma chain. F(1) is attached to F(0) by a central stalk formed by the gamma and epsilon chains, while a peripheral stalk is formed by the delta and b chains.

The protein resides in the cell membrane. In terms of biological role, f(1)F(0) ATP synthase produces ATP from ADP in the presence of a proton or sodium gradient. F-type ATPases consist of two structural domains, F(1) containing the extramembraneous catalytic core and F(0) containing the membrane proton channel, linked together by a central stalk and a peripheral stalk. During catalysis, ATP synthesis in the catalytic domain of F(1) is coupled via a rotary mechanism of the central stalk subunits to proton translocation. Its function is as follows. Key component of the F(0) channel; it plays a direct role in translocation across the membrane. A homomeric c-ring of between 10-14 subunits forms the central stalk rotor element with the F(1) delta and epsilon subunits. This chain is ATP synthase subunit c, found in Ureaplasma parvum serovar 3 (strain ATCC 27815 / 27 / NCTC 11736).